Here is a 300-residue protein sequence, read N- to C-terminus: Protein Bel-1 (300 aa).

Disordered stretches follow at residues Met-1–Gln-20, Val-26–Arg-50, and Lys-185–Val-237. Over residues Ala-11–Gln-20 the composition is skewed to polar residues. The DNA-binding element occupies Ser-89–His-200. Basic and acidic residues predominate over residues Asp-201–Glu-210. The span at Lys-211–Lys-222 shows a compositional bias: basic residues. The Nuclear localization signal signature appears at Lys-214 to Arg-223. The interval Ser-224–Leu-300 is transactivation domain.

Homodimer or homomultimer. Forms complexes with the host nuclear factors NFIA, NFIB, NFIC or NFIX.

The protein resides in the host nucleus. Transcriptional transactivator that activates the viral internal promoter (IP), thereby enhancing its own expression. This transactivation is repressed by nuclear factor I. Also transactivates the long terminal repeat (LTR) promoter, thereby inducing structural gene expression, initiating the late phase of infection. It is therefore a key regulator of viral gene expression. It directly binds to and activates DNA target sites of viral promoters and those of distinct cellular genes. Required for viral replication. This Pan troglodytes (Chimpanzee) protein is Protein Bel-1 (bel1).